Consider the following 399-residue polypeptide: uncharacterized protein (399 aa).

5 consecutive transmembrane segments (helical) span residues 26-46 (LLTI…ISLG), 266-286 (VITI…AVGI), 301-321 (IGIL…FVVE), 324-344 (FLGL…AEVI), and 358-378 (AWIS…VGVI).

Belongs to the ABC-4 integral membrane protein family.

It localises to the cell membrane. This is an uncharacterized protein from Methanocaldococcus jannaschii (strain ATCC 43067 / DSM 2661 / JAL-1 / JCM 10045 / NBRC 100440) (Methanococcus jannaschii).